A 125-amino-acid chain; its full sequence is Interleukin-6 (125 aa).

A disulfide bridge links cysteine 16 with cysteine 26.

Belongs to the IL-6 superfamily. Component of a hexamer of two molecules each of IL6, IL6R and IL6ST; first binds to IL6R to associate with the signaling subunit IL6ST. Interacts with IL6R (via the N-terminal ectodomain); this interaction may be affected by IL6R-binding with SORL1, hence decreasing IL6 cis signaling. Interacts with SORL1 (via the N-terminal ectodomain); this interaction leads to IL6 internalization and lysosomal degradation. May form a trimeric complex with the soluble SORL1 ectodomain and soluble IL6R receptor; this interaction might stabilize circulating IL6, hence promoting IL6 trans signaling.

The protein resides in the secreted. In terms of biological role, cytokine with a wide variety of biological functions in immunity, tissue regeneration, and metabolism. Binds to IL6R, then the complex associates to the signaling subunit IL6ST/gp130 to trigger the intracellular IL6-signaling pathway. The interaction with the membrane-bound IL6R and IL6ST stimulates 'classic signaling', whereas the binding of IL6 and soluble IL6R to IL6ST stimulates 'trans-signaling'. Alternatively, 'cluster signaling' occurs when membrane-bound IL6:IL6R complexes on transmitter cells activate IL6ST receptors on neighboring receiver cells. IL6 is a potent inducer of the acute phase response. Rapid production of IL6 contributes to host defense during infection and tissue injury, but excessive IL6 synthesis is involved in disease pathology. In the innate immune response, is synthesized by myeloid cells, such as macrophages and dendritic cells, upon recognition of pathogens through toll-like receptors (TLRs) at the site of infection or tissue injury. In the adaptive immune response, is required for the differentiation of B cells into immunoglobulin-secreting cells. Plays a major role in the differentiation of CD4(+) T cell subsets. Essential factor for the development of T follicular helper (Tfh) cells that are required for the induction of germinal-center formation. Required to drive naive CD4(+) T cells to the Th17 lineage. Also required for proliferation of myeloma cells and the survival of plasmablast cells. Its function is as follows. Acts as an essential factor in bone homeostasis and on vessels directly or indirectly by induction of VEGF, resulting in increased angiogenesis activity and vascular permeability. Induces, through 'trans-signaling' and synergistically with IL1B and TNF, the production of VEGF. Involved in metabolic controls, is discharged into the bloodstream after muscle contraction increasing lipolysis and improving insulin resistance. 'Trans-signaling' in central nervous system also regulates energy and glucose homeostasis. Mediates, through GLP-1, crosstalk between insulin-sensitive tissues, intestinal L cells and pancreatic islets to adapt to changes in insulin demand. Also acts as a myokine. Plays a protective role during liver injury, being required for maintenance of tissue regeneration. Also has a pivotal role in iron metabolism by regulating HAMP/hepcidin expression upon inflammation or bacterial infection. Through activation of IL6ST-YAP-NOTCH pathway, induces inflammation-induced epithelial regeneration. The polypeptide is Interleukin-6 (IL6) (Neovison vison (American mink)).